A 148-amino-acid chain; its full sequence is uncharacterized protein (148 aa).

It localises to the plastid. The protein localises to the chloroplast. This is an uncharacterized protein from Porphyra purpurea (Red seaweed).